Consider the following 419-residue polypeptide: Tyrosine--tRNA ligase (419 aa).

An L-tyrosine-binding site is contributed by Tyr34. Positions 39 to 48 (PSGDSMHIGH) match the 'HIGH' region motif. Positions 168 and 172 each coordinate L-tyrosine. The 'KMSKS' region motif lies at 230–234 (KFGKS). Lys233 lines the ATP pocket. One can recognise an S4 RNA-binding domain in the interval 352–418 (VNLVDWLVTL…GKKKYFLVSY (67 aa)).

This sequence belongs to the class-I aminoacyl-tRNA synthetase family. TyrS type 1 subfamily. In terms of assembly, homodimer.

The protein localises to the cytoplasm. The catalysed reaction is tRNA(Tyr) + L-tyrosine + ATP = L-tyrosyl-tRNA(Tyr) + AMP + diphosphate + H(+). Catalyzes the attachment of tyrosine to tRNA(Tyr) in a two-step reaction: tyrosine is first activated by ATP to form Tyr-AMP and then transferred to the acceptor end of tRNA(Tyr). The polypeptide is Tyrosine--tRNA ligase (Listeria innocua serovar 6a (strain ATCC BAA-680 / CLIP 11262)).